A 508-amino-acid chain; its full sequence is GTPase Obg (508 aa).

The Obg domain occupies 2 to 159 (ARFVDRVVLH…HDVILELKSM (158 aa)). Positions 160 to 341 (ADIGLVGFPS…LKYAMLDLVQ (182 aa)) constitute an OBG-type G domain. GTP contacts are provided by residues 166–173 (GFPSAGKS), 191–195 (FTTLQ), 212–215 (DVPG), 292–295 (NKAD), and 322–324 (SAV). Mg(2+)-binding residues include Ser173 and Thr193. The OCT domain occupies 364 to 444 (DARKKNKDFE…IGEVSFEWEP (81 aa)).

This sequence belongs to the TRAFAC class OBG-HflX-like GTPase superfamily. OBG GTPase family. Monomer. Requires Mg(2+) as cofactor.

The protein localises to the cytoplasm. An essential GTPase which binds GTP, GDP and possibly (p)ppGpp with moderate affinity, with high nucleotide exchange rates and a fairly low GTP hydrolysis rate. Plays a role in control of the cell cycle, stress response, ribosome biogenesis and in those bacteria that undergo differentiation, in morphogenesis control. The chain is GTPase Obg from Corynebacterium diphtheriae (strain ATCC 700971 / NCTC 13129 / Biotype gravis).